The primary structure comprises 362 residues: NAC domain-containing protein 5 (362 aa).

An NAC domain is found at 3 to 151; sequence NPVGFRFRPT…TYTLCKVKFK (149 aa). The DNA-binding element occupies 107–157; it reads IGEKRVLVFKNHGGSKSDWAMHEYHATFSSPNQIMTYTLCKVKFKGERREF. A disordered region spans residues 240 to 266; it reads DDRNNHTPQKPLTGVFSDHSTDGSDSD.

The protein localises to the nucleus. The polypeptide is NAC domain-containing protein 5 (NAC005) (Arabidopsis thaliana (Mouse-ear cress)).